We begin with the raw amino-acid sequence, 130 residues long: Small ribosomal subunit protein uS11 (130 aa).

Belongs to the universal ribosomal protein uS11 family. As to quaternary structure, part of the 30S ribosomal subunit. Interacts with proteins S7 and S18. Binds to IF-3.

In terms of biological role, located on the platform of the 30S subunit, it bridges several disparate RNA helices of the 16S rRNA. Forms part of the Shine-Dalgarno cleft in the 70S ribosome. The polypeptide is Small ribosomal subunit protein uS11 (Gluconobacter oxydans (strain 621H) (Gluconobacter suboxydans)).